We begin with the raw amino-acid sequence, 481 residues long: Phosphoglucosamine mutase (481 aa).

S128 acts as the Phosphoserine intermediate in catalysis. The Mg(2+) site is built by S128, D269, D271, and D273. At S128 the chain carries Phosphoserine.

The protein belongs to the phosphohexose mutase family. Mg(2+) serves as cofactor. In terms of processing, activated by phosphorylation.

It catalyses the reaction alpha-D-glucosamine 1-phosphate = D-glucosamine 6-phosphate. Catalyzes the conversion of glucosamine-6-phosphate to glucosamine-1-phosphate. The protein is Phosphoglucosamine mutase of Synechocystis sp. (strain ATCC 27184 / PCC 6803 / Kazusa).